We begin with the raw amino-acid sequence, 552 residues long: B-cell linker protein (552 aa).

The segment at 50–431 (TGKDTWDRLK…SSISSISSTA (382 aa)) is disordered. Basic and acidic residues predominate over residues 67–76 (PRRDYASEHA). Residues 77 to 93 (DNEEEQWSDDFDSDYEN) are compositionally biased toward acidic residues. Residues Tyr-91, Tyr-103, Tyr-115, Tyr-194, Tyr-205, and Tyr-249 each carry the phosphotyrosine; by SYK modification. Positions 188-205 (SDDEDNYIVPVDNDDDNY) are enriched in acidic residues. Basic and acidic residues-rich tracts occupy residues 277 to 295 (NAEH…KLDA), 309 to 322 (PKTD…DENH), and 368 to 382 (NEDK…RGSS). One can recognise an SH2 domain in the interval 442–549 (WYAATCDRKT…KDSTKLKYIV (108 aa)).

As to quaternary structure, associates with PLCG1, VAV1 and NCK1 in a B-cell antigen receptor-dependent fashion. Interacts through its SH2 domain with CD79A. Interacts with VAV3, PLCG2 and GRB2. Following BCR activation, phosphorylated on tyrosine residues by SYK and LYN. When phosphorylated, serves as a scaffold to assemble downstream targets of antigen activation, including PLCG1, VAV1, GRB2 and NCK1. Phosphorylation is required for both Ca(2+) and MAPK signaling pathways. Phosphorylation of Tyr-103, Tyr-194 and Tyr-205 facilitates PLCG1 binding. Phosphorylation of Tyr-115 facilitates BTK binding. Phosphorylation of Tyr-91 facilitates VAV1 and NCK1 binding. Highly expressed in the bursa, very low expression in ovary and spleen. Expression was variable among B-cell lines. Highly expressed in immature B-cell lines such as DT40 and CL18, low expression was seen in relatively mature B-cell lines, such as 293B9 and 249L4. No expression was seen in T-cell lines.

Its subcellular location is the cytoplasm. The protein resides in the cell membrane. Functionally, functions as a central linker protein, downstream of the B-cell receptor (BCR), bridging the SYK kinase to a multitude of signaling pathways and regulating biological outcomes of B-cell function and development. Plays a role in the activation of ERK/EPHB2, MAP kinase p38 and JNK. Modulates AP1 activation. Important for the activation of NF-kappa-B and NFAT. Plays an important role in BCR-mediated PLCG1 and PLCG2 activation and Ca(2+) mobilization and is required for trafficking of the BCR to late endosomes. However, does not seem to be required for pre-BCR-mediated activation of MAP kinase and phosphatidyl-inositol 3 (PI3) kinase signaling. May be required for the RAC1-JNK pathway. Plays a critical role in orchestrating the pro-B cell to pre-B cell transition. Plays a critical role in B-cell development in the bursa. Plays an important role in BCR-induced apoptosis. The protein is B-cell linker protein (BLNK) of Gallus gallus (Chicken).